The primary structure comprises 734 residues: MELRFPRFSQGLAQDPTTRRIWFGIATAHDFESHDDITEERLYQNIFASHFGQLAIIFLWTSGNLFHVAWQGNFESWIQDPLHVRPIAHAIWDPHFGQPAVEAFTRGGAAGPVNIAYSGVYQWWYTIGLRTNEDLYTGALFLLFLSTLSLIGGWLHLQPKWKPSLSWFKNAESRLNHHLSGLFGVSSLAWTGHLVHVAIPGSRGEYVRWNNFLDVLPYPQGLGPLLTGQWNLYAQNPDSSNHLFGTTQGAGTAILTLLGGFHPQTQSLWLTDIAHHHLAIAFIFLIAGHMYRTNFGIGHSIKDLLEAHTPPGGRLGRGHKGLYDTINNSIHFQLGLALASLGVITSLVAQHMYSLPAYAFIAQDFTTQAALYTHHQYIAGFIMTGAFAHGAIFFIRDYNPEQNEDNVLARMLDHKEAIISHLSWASLFLGFHTLGLYVHNDVMLAFGTPEKQILIEPIFAQWIQSAHGKTTYGFDILLSSTNGPAFNAGRNIWLPGWLNAVNENSNSLFLTIGPGDFLVHHAIALGLHTTTLILVKGALDARGSKLMPDKKDFGYSFPCDGPGRGGTCDISAWDAFYLAVFWMLNTIGWVTFYWHWKHITLWQGNVSQFNESSTYLMGWLRDYLWLNSSQLINGYNPFGMNSLSVWAWMFLFGHLVWATGFMFLISWRGYWQELIETLAWAHERTPLANLIRWRDKPVALSIVQARLVGLAHFSVGYIFTYAAFLIASTSGKFG.

The next 8 membrane-spanning stretches (helical) occupy residues Ile-46 to Ala-69, Leu-135 to Gln-158, Leu-175 to Ile-199, Ile-273 to Tyr-291, Ile-330 to Tyr-353, Ala-369 to Ile-395, Ala-417 to His-439, and Phe-517 to Val-535. Positions 559 and 568 each coordinate [4Fe-4S] cluster. The next 2 membrane-spanning stretches (helical) occupy residues Ala-575 to Trp-596 and Leu-643 to Ile-665. Positions 654, 662, and 670 each coordinate chlorophyll a. Trp-671 lines the phylloquinone pocket. Residues Leu-707–Ala-727 traverse the membrane as a helical segment.

Belongs to the PsaA/PsaB family. As to quaternary structure, the PsaA/B heterodimer binds the P700 chlorophyll special pair and subsequent electron acceptors. PSI consists of a core antenna complex that captures photons, and an electron transfer chain that converts photonic excitation into a charge separation. The eukaryotic PSI reaction center is composed of at least 11 subunits. It depends on P700 is a chlorophyll a/chlorophyll a' dimer, A0 is one or more chlorophyll a, A1 is one or both phylloquinones and FX is a shared 4Fe-4S iron-sulfur center. as a cofactor.

It localises to the plastid. The protein localises to the chloroplast thylakoid membrane. It carries out the reaction reduced [plastocyanin] + hnu + oxidized [2Fe-2S]-[ferredoxin] = oxidized [plastocyanin] + reduced [2Fe-2S]-[ferredoxin]. Functionally, psaA and PsaB bind P700, the primary electron donor of photosystem I (PSI), as well as the electron acceptors A0, A1 and FX. PSI is a plastocyanin-ferredoxin oxidoreductase, converting photonic excitation into a charge separation, which transfers an electron from the donor P700 chlorophyll pair to the spectroscopically characterized acceptors A0, A1, FX, FA and FB in turn. Oxidized P700 is reduced on the lumenal side of the thylakoid membrane by plastocyanin. This chain is Photosystem I P700 chlorophyll a apoprotein A2, found in Saccharum hybrid (Sugarcane).